Here is a 156-residue protein sequence, read N- to C-terminus: SPbeta prophage-derived uncharacterized protein YorH (156 aa).

This is SPbeta prophage-derived uncharacterized protein YorH (yorH) from Bacillus subtilis (strain 168).